A 255-amino-acid chain; its full sequence is tRNA (guanine-N(1)-)-methyltransferase (255 aa).

Residues Gly-113 and 133–138 contribute to the S-adenosyl-L-methionine site; that span reads IGDYVL.

This sequence belongs to the RNA methyltransferase TrmD family. In terms of assembly, homodimer.

The protein localises to the cytoplasm. The enzyme catalyses guanosine(37) in tRNA + S-adenosyl-L-methionine = N(1)-methylguanosine(37) in tRNA + S-adenosyl-L-homocysteine + H(+). In terms of biological role, specifically methylates guanosine-37 in various tRNAs. This chain is tRNA (guanine-N(1)-)-methyltransferase, found in Salmonella schwarzengrund (strain CVM19633).